The primary structure comprises 515 residues: Maturase K (515 aa).

This sequence belongs to the intron maturase 2 family. MatK subfamily.

The protein resides in the plastid. It is found in the chloroplast. Usually encoded in the trnK tRNA gene intron. Probably assists in splicing its own and other chloroplast group II introns. The polypeptide is Maturase K (Pinus uncinata (Mountain pine)).